A 127-amino-acid polypeptide reads, in one-letter code: DNA-directed RNA polymerases I, II, and III subunit RPABC2 (127 aa).

Positions 1–34 are enriched in acidic residues; it reads MSDNEDNFDGDDFDDVEEDEGLDDLENAEEEGQE. Positions 1 to 53 are disordered; that stretch reads MSDNEDNFDGDDFDDVEEDEGLDDLENAEEEGQENVEILPSGERPQANQKRIT. At serine 2 the chain carries N-acetylserine. Phosphoserine; by CK2 is present on serine 2.

This sequence belongs to the archaeal Rpo6/eukaryotic RPB6 RNA polymerase subunit family. Component of the RNA polymerase I (Pol I), RNA polymerase II (Pol II) and RNA polymerase III (Pol III) complexes consisting of at least 13, 12 and 17 subunits, respectively. Pol I complex consists of a ten-subunit catalytic core composed of POLR1A/RPA1, POLR1B/RPA2, POLR1C/RPAC1, POLR1D/RPAC2, POLR1H/RPA12, POLR2E/RPABC1, POLR2F/RPABC2, POLR2H/RPABC3, POLR2K/RPABC4 and POLR2L/RPABC5; a mobile stalk subunit POLR1F/RPA43 protruding from the core and additional subunits homologous to general transcription factors POLR1E/RPA49 and POLR1G/RPA34. Part of Pol I pre-initiation complex (PIC), in which Pol I core assembles with RRN3 and promoter-bound UTBF and SL1/TIF-IB complex. Pol II complex contains a ten-subunit catalytic core composed of POLR2A/RPB1, POLR2B/RPB2, POLR2C/RPB3, POLR2I/RPB9, POLR2J/RPB11, POLR2E/RPABC1, POLR2F/RPABC2, POLR2H/RPABC3, POLR2K/RPABC4 and POLR2L/RPABC5 and a mobile stalk composed of two subunits POLR2D/RPB4 and POLR2G/RPB7. Part of Pol II(G) complex, in which Pol II core associates with an additional subunit POLR2M; unlike conventional Pol II, Pol II(G) functions as a transcriptional repressor. Part of TBP-based Pol II pre-initiation complex (PIC), in which Pol II core assembles with general transcription factors and other specific initiation factors including GTF2E1, GTF2E2, GTF2F1, GTF2F2, TCEA1, ERCC2, ERCC3, GTF2H2, GTF2H3, GTF2H4, GTF2H5, GTF2A1, GTF2A2, GTF2B and TBP; this large multi-subunit PIC complex mediates DNA unwinding and targets Pol II core to the transcription start site where the first phosphodiester bond forms. Pol III complex consists of a ten-subunit catalytic core composed of POLR3A/RPC1, POLR3B/RPC2, POLR1C/RPAC1, POLR1D/RPAC2, POLR3K/RPC10, POLR2E/RPABC1, POLR2F/RPABC2, POLR2H/RPABC3, POLR2K/RPABC4 and POLR2L/RPABC5; a mobile stalk composed of two subunits POLR3H/RPC8 and CRCP/RPC9, protruding from the core and functioning primarily in transcription initiation; and additional subunits homologous to general transcription factors of the RNA polymerase II machinery, POLR3C/RPC3-POLR3F/RPC6-POLR3G/RPC7 heterotrimer required for transcription initiation and POLR3D/RPC4-POLR3E/RPC5 heterodimer involved in both transcription initiation and termination.

The protein localises to the nucleus. Its subcellular location is the nucleolus. DNA-dependent RNA polymerase catalyzes the transcription of DNA into RNA using the four ribonucleoside triphosphates as substrates. Common component of RNA polymerases I, II, and III which synthesize ribosomal RNA precursors, mRNA precursors and many functional non-coding RNAs, and small RNAs, such as 5S rRNA and tRNAs, respectively. Pol II is the central component of the basal RNA polymerase II transcription machinery. Pols are composed of mobile elements that move relative to each other. In Pol II, POLR2F/RPABC2 is part of the clamp element and together with parts of POLR2A/RPB1 and POLR2B/RPB2 forms a pocket to which the POLR2D/RPB4-POLR2G/RPB7 subcomplex binds. In Homo sapiens (Human), this protein is DNA-directed RNA polymerases I, II, and III subunit RPABC2.